The primary structure comprises 143 residues: uncharacterized protein (143 aa).

Residues 24–78 form the HTH cro/C1-type domain; that stretch reads IRQRRRWQNMSQAALGEAIGVTFQQVQKYEKGSNRVGAGRLQQISDALEVHPSYF. A DNA-binding region (H-T-H motif) is located at residues 35–54; that stretch reads QAALGEAIGVTFQQVQKYEK.

This is an uncharacterized protein from Sinorhizobium fredii (strain NBRC 101917 / NGR234).